The sequence spans 462 residues: Retinoic acid receptor alpha (462 aa).

Positions Met1 to Pro87 are modulating. A compositionally biased stretch (polar residues) spans Gly52–Gln64. Residues Gly52–Ser77 form a disordered region. Ser77 carries the post-translational modification Phosphoserine; by CDK7. 2 NR C4-type zinc fingers span residues Cys88–Cys108 and Cys124–Cys148. The nuclear receptor DNA-binding region spans Cys88–Met153. Residue Ser96 is modified to Phosphoserine; by PKB/AKT1. A hinge region spans residues Ser154–Pro182. Residues Lys166 and Lys171 each participate in a glycyl lysine isopeptide (Lys-Gly) (interchain with G-Cter in SUMO) cross-link. One can recognise an NR LBD domain in the interval Glu183–Ser417. Ser219 is modified (phosphoserine; by PKA). Cys235 contacts all-trans-retinoate. A UBR5-degron motif is present at residues Ile254–Ile258. Ser287 is a binding site for all-trans-retinoate. Ser369 bears the Phosphoserine; by PKA mark. A Glycyl lysine isopeptide (Lys-Gly) (interchain with G-Cter in SUMO) cross-link involves residue Lys399. The interval Gly404–Gly419 is required for binding corepressor NCOR1. The 9aaTAD signature appears at Pro408–Asn416. Positions Gly419–Pro462 are disordered. Residues Gln426–Leu437 show a composition bias toward gly residues. Low complexity predominate over residues Cys444–Pro462.

Belongs to the nuclear hormone receptor family. NR1 subfamily. As to quaternary structure, heterodimer; with RXRA (via C-terminus); association with RXRA is enhanced by pulsatile shear stress. Binds DNA preferentially as a heterodimer. RXRA serves as enhancer to induce RARA binding to RARE. Interacts with RXRG. Interacts with coactivators NCOA3 and NCOA6. Interacts with NCOA7; the interaction requires ligand-binding. Interacts (via the ligand-binding domain) with PRAME; the interaction is ligand (retinoic acid)-dependent. Interacts with AKT1; the interaction phosphorylates RARA and represses transactivation. Interacts with PRKAR1A; the interaction negatively regulates RARA transcriptional activity. Interacts with NCOR1 and NCOR2. Interacts with PRMT2. Interacts with LRIF1. Interacts with ASXL1 and NCOA1. Interacts with ACTN4. In a complex with HDAC3, HDAC5 and HDAC7; the HDACs serve as corepressors of RARA, causing its deacetylation and inhibition of RARE DNA element binding; association with HDAC3, HDAC5 and HDAC7 is increased upon oscillatory shear stress. Interacts with CDK7. In the absence of hormonal ligand, interacts with TACC1. Phosphorylated on serine and threonine residues. Phosphorylation does not change during cell cycle. Phosphorylation on Ser-77 is crucial for transcriptional activity. Phosphorylation by AKT1 is required for the repressor activity but has no effect on DNA binding, protein stability nor subcellular localization. Phosphorylated by PKA in vitro. This phosphorylation on Ser-219 and Ser-369 is critical for ligand binding, nuclear localization and transcriptional activity in response to FSH signaling. In terms of processing, sumoylated with SUMO2, mainly on Lys-399 which is also required for SENP6 binding. On all-trans retinoic acid (ATRA) binding, a conformational change may occur that allows sumoylation on two additional site, Lys-166 and Lys-171. Probably desumoylated by SENP6. Sumoylation levels determine nuclear localization and regulate ATRA-mediated transcriptional activity. Post-translationally, trimethylation enhances heterodimerization with RXRA and positively modulates the transcriptional activation. Ubiquitinated by UBR5, leading to its degradation: UBR5 specifically recognizes and binds ligand-bound RARA when it is not associated with coactivators (NCOAs). In presence of NCOAs, the UBR5-degron is not accessible, preventing its ubiquitination and degradation. In terms of processing, acetylated; acetylation is increased upon pulsatile shear stress and decreased upon oscillatory shear stress. Expressed in monocytes.

It localises to the nucleus. The protein localises to the cytoplasm. In terms of biological role, receptor for retinoic acid. Retinoic acid receptors bind as heterodimers to their target response elements in response to their ligands, all-trans or 9-cis retinoic acid, and regulate gene expression in various biological processes. The RXR/RAR heterodimers bind to the retinoic acid response elements (RARE) composed of tandem 5'-AGGTCA-3' sites known as DR1-DR5. In the absence of ligand, the RXR-RAR heterodimers associate with a multiprotein complex containing transcription corepressors that induce histone deacetylation, chromatin condensation and transcriptional suppression. On ligand binding, the corepressors dissociate from the receptors and associate with the coactivators leading to transcriptional activation. Formation of a complex with histone deacetylases might lead to inhibition of RARE DNA element binding and to transcriptional repression. Transcriptional activation and RARE DNA element binding might be supported by the transcription factor KLF2. RARA plays an essential role in the regulation of retinoic acid-induced germ cell development during spermatogenesis. Has a role in the survival of early spermatocytes at the beginning prophase of meiosis. In Sertoli cells, may promote the survival and development of early meiotic prophase spermatocytes. In concert with RARG, required for skeletal growth, matrix homeostasis and growth plate function. Together with RXRA, positively regulates microRNA-10a expression, thereby inhibiting the GATA6/VCAM1 signaling response to pulsatile shear stress in vascular endothelial cells. In association with HDAC3, HDAC5 and HDAC7 corepressors, plays a role in the repression of microRNA-10a and thereby promotes the inflammatory response. The protein is Retinoic acid receptor alpha (RARA) of Homo sapiens (Human).